The following is a 446-amino-acid chain: Thymidine phosphorylase (446 aa).

It belongs to the thymidine/pyrimidine-nucleoside phosphorylase family. In terms of assembly, homodimer.

It catalyses the reaction thymidine + phosphate = 2-deoxy-alpha-D-ribose 1-phosphate + thymine. It participates in pyrimidine metabolism; dTMP biosynthesis via salvage pathway; dTMP from thymine: step 1/2. Functionally, the enzymes which catalyze the reversible phosphorolysis of pyrimidine nucleosides are involved in the degradation of these compounds and in their utilization as carbon and energy sources, or in the rescue of pyrimidine bases for nucleotide synthesis. The sequence is that of Thymidine phosphorylase from Idiomarina loihiensis (strain ATCC BAA-735 / DSM 15497 / L2-TR).